The chain runs to 691 residues: DNA ligase (691 aa).

NAD(+) contacts are provided by residues 41-45 (DAEYD), 90-91 (SL), and Glu-130. The active-site N6-AMP-lysine intermediate is Lys-132. Residues Arg-153, Glu-190, Lys-307, and Lys-331 each contribute to the NAD(+) site. 4 residues coordinate Zn(2+): Cys-425, Cys-428, Cys-443, and Cys-449. A BRCT domain is found at 610-691 (APQGVLAGKT…LHQLLEGNTP (82 aa)).

It belongs to the NAD-dependent DNA ligase family. LigA subfamily. Requires Mg(2+) as cofactor. It depends on Mn(2+) as a cofactor.

It catalyses the reaction NAD(+) + (deoxyribonucleotide)n-3'-hydroxyl + 5'-phospho-(deoxyribonucleotide)m = (deoxyribonucleotide)n+m + AMP + beta-nicotinamide D-nucleotide.. Its function is as follows. DNA ligase that catalyzes the formation of phosphodiester linkages between 5'-phosphoryl and 3'-hydroxyl groups in double-stranded DNA using NAD as a coenzyme and as the energy source for the reaction. It is essential for DNA replication and repair of damaged DNA. The polypeptide is DNA ligase (Burkholderia cenocepacia (strain HI2424)).